We begin with the raw amino-acid sequence, 274 residues long: Isoprenyl transferase (274 aa).

The active site involves D49. Residue D49 coordinates Mg(2+). Substrate-binding positions include 50–53 (GNRR), F54, R62, H66, and 94–96 (STD). N97 (proton acceptor) is an active-site residue. Residues R100, R223, and 229-231 (RLS) contribute to the substrate site. E242 contacts Mg(2+).

The protein belongs to the UPP synthase family. As to quaternary structure, homodimer. It depends on Mg(2+) as a cofactor.

In terms of biological role, catalyzes the condensation of isopentenyl diphosphate (IPP) with allylic pyrophosphates generating different type of terpenoids. The sequence is that of Isoprenyl transferase from Deinococcus radiodurans (strain ATCC 13939 / DSM 20539 / JCM 16871 / CCUG 27074 / LMG 4051 / NBRC 15346 / NCIMB 9279 / VKM B-1422 / R1).